Reading from the N-terminus, the 401-residue chain is MSHRKFSAPRHGHMGFTPKKRSRTYRGRIKAFPKDDKSKPIHLTAFLGYKAGMTHIVRDVDKPGSKVNKKEVVEAVTIVETPPMVIAGVTGYVDTPQGPRALTTIWAEHLSEEARRRFYSNWAKSKKKAFTKYAKKWQDEDGKKLIEADFAKLKKYCSSIRVIAHTQMKILRRRQKKAHLVEIQVNGGTIEQKVDWAREHLEKQVQVDTVFAQDEMIDTIGVTRGHGFKGVTSRWHTKKLPRKTHKGLRKVACIGAWHPSRVAFTVARAGQKGFHHRTIINNKIYRIGKSALTEEGKNNGSTEFDLTQKTITPMGGFPRYGIVNQDYIMLRGAVLGPKKRLITLRKSLITQTKRVAHEKINLKWIDTSSKTGHGRFQTTAEKRAFMGKLKRDFLAEAEAKA.

Positions 1–22 are disordered; sequence MSHRKFSAPRHGHMGFTPKKRS.

This sequence belongs to the universal ribosomal protein uL3 family.

It localises to the cytoplasm. Its function is as follows. The L3 protein is a component of the large subunit of cytoplasmic ribosomes. The protein is Large ribosomal subunit protein uL3 (rpl-3) of Caenorhabditis elegans.